Here is a 109-residue protein sequence, read N- to C-terminus: Ribonuclease P protein component (109 aa).

Belongs to the RnpA family. As to quaternary structure, consists of a catalytic RNA component (M1 or rnpB) and a protein subunit.

It carries out the reaction Endonucleolytic cleavage of RNA, removing 5'-extranucleotides from tRNA precursor.. In terms of biological role, RNaseP catalyzes the removal of the 5'-leader sequence from pre-tRNA to produce the mature 5'-terminus. It can also cleave other RNA substrates such as 4.5S RNA. The protein component plays an auxiliary but essential role in vivo by binding to the 5'-leader sequence and broadening the substrate specificity of the ribozyme. In Nitratiruptor sp. (strain SB155-2), this protein is Ribonuclease P protein component.